Reading from the N-terminus, the 37-residue chain is Desulforedoxin (37 aa).

4 residues coordinate Fe cation: Cys-10, Cys-13, Cys-29, and Cys-30.

The protein to the N-terminal section of desulfoferrodoxin. Homodimer. Fe cation serves as cofactor.

In terms of biological role, nonheme iron protein possibly involved in electron transport. In Megalodesulfovibrio gigas (Desulfovibrio gigas), this protein is Desulforedoxin (dsr).